The following is a 1201-amino-acid chain: Vitamin B12-dependent ribonucleotide reductase (1201 aa).

Substrate-binding positions include S153, 198–199 (AC), G230, 482–486 (NPCSE), and 683–687 (PTGTI). A disulfide bond links C199 and C495. Residue N482 is the Proton acceptor of the active site. C484 functions as the Cysteine radical intermediate in the catalytic mechanism. E486 (proton acceptor) is an active-site residue. The span at 1100–1118 (DEIGSKRATAESNGQEKET) shows a compositional bias: basic and acidic residues. The interval 1100–1120 (DEIGSKRATAESNGQEKETLS) is disordered.

It belongs to the ribonucleoside diphosphate reductase class-2 family. Requires adenosylcob(III)alamin as cofactor.

The catalysed reaction is a 2'-deoxyribonucleoside 5'-diphosphate + [thioredoxin]-disulfide + H2O = a ribonucleoside 5'-diphosphate + [thioredoxin]-dithiol. Functionally, catalyzes the reduction of ribonucleotides to deoxyribonucleotides. May function to provide a pool of deoxyribonucleotide precursors for DNA repair during oxygen limitation and/or for immediate growth after restoration of oxygen. The protein is Vitamin B12-dependent ribonucleotide reductase (nrdJ) of Leptospira interrogans serogroup Icterohaemorrhagiae serovar Lai (strain 56601).